Here is a 307-residue protein sequence, read N- to C-terminus: Glycine--tRNA ligase alpha subunit (307 aa).

Belongs to the class-II aminoacyl-tRNA synthetase family. In terms of assembly, tetramer of two alpha and two beta subunits.

It is found in the cytoplasm. It catalyses the reaction tRNA(Gly) + glycine + ATP = glycyl-tRNA(Gly) + AMP + diphosphate. The chain is Glycine--tRNA ligase alpha subunit from Xylella fastidiosa (strain M23).